We begin with the raw amino-acid sequence, 429 residues long: Ribosomal RNA small subunit methyltransferase B (429 aa).

S-adenosyl-L-methionine is bound by residues 254–260 (CAAPGGK), Asp277, Asp303, and Asp322. Cys375 serves as the catalytic Nucleophile.

It belongs to the class I-like SAM-binding methyltransferase superfamily. RsmB/NOP family.

It is found in the cytoplasm. It carries out the reaction cytidine(967) in 16S rRNA + S-adenosyl-L-methionine = 5-methylcytidine(967) in 16S rRNA + S-adenosyl-L-homocysteine + H(+). In terms of biological role, specifically methylates the cytosine at position 967 (m5C967) of 16S rRNA. This Shigella boydii serotype 4 (strain Sb227) protein is Ribosomal RNA small subunit methyltransferase B.